A 222-amino-acid polypeptide reads, in one-letter code: MTPQTEQELLQRAQAIAGLRFAELAQSLHMPVPPDLKRDKGWVGMLIETALGATAGSKAEQDFAHLGIELKTLPINAQGMPLETTFVSLAPLTQNVGVSWENSHVRHKLSKVLWILVEGERQIPLSERRVGQPILWQPSAQQELRLKRDWEELMEYISLGKLEQINATLGEVLQLRPKGANSKALTRGIGKHGEMIDTLPLGFYLRKTFTAEILQQFLLGTG.

Belongs to the MutH family.

The protein resides in the cytoplasm. Functionally, sequence-specific endonuclease that cleaves unmethylated GATC sequences. It is involved in DNA mismatch repair. The protein is DNA mismatch repair protein MutH of Pasteurella multocida (strain Pm70).